The sequence spans 650 residues: MEESNNFLLSPDSIWSQLLENSYALNEINCFQSFGTIDNNNNNYSNNNKNGNEELSQPTEIQQQLQNYQELQQQKYQERQQQYQTQYQQPYIEPIFEIVVTQQDQQELIPQQQQQEQDQQEDQDQEQEQELQQQQQQLQQQQQQQQQQQQQQQQQQQQQQQQQQQQQKQQKQQKQQQQEQPSIIKEQDQEQKKIIQEQLCEKSIQTLENHFFNTNTPKLDHQILSNYSEFFKINQPITDIPTTLNTNLQSDNNNNNNNNNNNNNNNNNNNNNNNNNNNLLNEKQIESTSKIKRINLGYDITKITFNKIEKGKRNQTESSKNFRERKKEYIKDIELKLKELTIENDKLKKENDTLKKIGIEIMRSEPESINMIMECKKIIKKLEKALIDNDERSLIYLLYLYHSETSKRYSLTEIEVDKIINPYSQLKLKLAGYIQNPTTEILDIFGGNNNNNNNNNNNNNNNNNNNDNDDDNEEEEISWFKKYKKEANLTIEQSNKLDLLRDYHCLKFELLLKERRELDRDIKKLYNGIALSGFDLTPRSLANWDIDKQIETTNKLNLLKIKIISSLNLNLDTFSSISSILSPKQEALLLVRAHLFGSNKKNPHIEILNNVWTGLISKSSSPSFFEIAKLLKEMSDSANAKIMEDYLYKK.

A coiled-coil region spans residues 37 to 180 (IDNNNNNYSN…KQQKQQQQEQ (144 aa)). 2 disordered regions span residues 109–130 (IPQQ…QEQE) and 242–279 (TTLN…NNNL). Residues 118-129 (DQQEDQDQEQEQ) are compositionally biased toward acidic residues. The span at 242 to 251 (TTLNTNLQSD) shows a compositional bias: polar residues. Residues 252-278 (NNNNNNNNNNNNNNNNNNNNNNNNNNN) show a composition bias toward low complexity. A coiled-coil region spans residues 259 to 286 (NNNNNNNNNNNNNNNNNNNNLLNEKQIE). The bZIP domain maps to 305-368 (FNKIEKGKRN…IEIMRSEPES (64 aa)). The basic motif stretch occupies residues 307–327 (KIEKGKRNQTESSKNFRERKK). The interval 330–337 (IKDIELKL) is leucine-zipper. Residues 452–466 (NNNNNNNNNNNNNNN) show a composition bias toward low complexity. Positions 452-473 (NNNNNNNNNNNNNNNDNDDDNE) are disordered.

It belongs to the bZIP family.

It localises to the nucleus. Probable transcriptional regulator. The protein is Probable basic-leucine zipper transcription factor K (bzpK) of Dictyostelium discoideum (Social amoeba).